The chain runs to 138 residues: Large ribosomal subunit protein bL19 (138 aa).

It belongs to the bacterial ribosomal protein bL19 family.

This protein is located at the 30S-50S ribosomal subunit interface and may play a role in the structure and function of the aminoacyl-tRNA binding site. The chain is Large ribosomal subunit protein bL19 from Rickettsia africae (strain ESF-5).